The primary structure comprises 385 residues: Transcription termination factor 2, mitochondrial (385 aa).

The N-terminal 35 residues, 1–35, are a transit peptide targeting the mitochondrion; the sequence is MPWRLPTGHQLCRLCLLRKPRPALKIKPSSACVTY.

It belongs to the mTERF family. In terms of assembly, monomer.

The protein localises to the mitochondrion matrix. It localises to the mitochondrion nucleoid. Functionally, binds mitochondrial DNA and plays a role in the regulation of transcription of mitochondrial mRNA and rRNA species. This is Transcription termination factor 2, mitochondrial (Mterf2) from Mus musculus (Mouse).